The following is a 212-amino-acid chain: Dihydrophenazinedicarboxylate synthase (212 aa).

S8 provides a ligand contact to substrate. FMN contacts are provided by residues R63–A66 and C78–T79. Residue H80 participates in substrate binding. Residues R84–K85 and Q107 each bind FMN. Substrate is bound by residues R129 and S137. FMN contacts are provided by residues Q142 to S143 and R195.

Belongs to the pyridoxamine 5'-phosphate oxidase family. It depends on FMN as a cofactor.

The enzyme catalyses (1R,6R)-1,4,5,5a,6,9-hexahydrophenazine-1,6-dicarboxylate + O2 = (1R,10aS)-1,4,10,10a-tetrahydrophenazine-1,6-dicarboxylate + H2O2. The catalysed reaction is (1R,10aS)-1,4,10,10a-tetrahydrophenazine-1,6-dicarboxylate + O2 = (5aS)-5,5a-dihydrophenazine-1,6-dicarboxylate + H2O2. It carries out the reaction (1R,10aS)-1,4,10,10a-tetrahydrophenazine-1-carboxylate + O2 = (10aS)-10,10a-dihydrophenazine-1-carboxylate + H2O2. It catalyses the reaction (1R)-1,4,5,10-tetrahydrophenazine-1-carboxylate + O2 = (10aS)-10,10a-dihydrophenazine-1-carboxylate + H2O2. It functions in the pathway antibiotic biosynthesis; phenazine biosynthesis. In terms of biological role, involved in the biosynthesis of the antibiotic phenazine, a nitrogen-containing heterocyclic molecule having important roles in virulence, competition and biological control. Catalyzes several oxidations in the terminal steps of core phenazine biosynthesis. It oxidizes both hexahydrophenazine-1,6-dicarboxylic acid (HHPDC) and tetrahydrophenazine-1-carboxylic acid (THPCA) and thereby contributes to the generation of both phenazine-1,6-dicarboxylic acid (PDC) and phenazine-1-carboxylic acid (PCA). It synthesizes phenazines in their reduced form, which are the likely end products in vivo. This is Dihydrophenazinedicarboxylate synthase from Burkholderia lata (strain ATCC 17760 / DSM 23089 / LMG 22485 / NCIMB 9086 / R18194 / 383).